Consider the following 360-residue polypeptide: Phosphoserine aminotransferase (360 aa).

Arg-41 lines the L-glutamate pocket. Residues 75–76, Trp-101, Thr-151, Asp-171, and Gln-194 contribute to the pyridoxal 5'-phosphate site; that span reads AS. Lys-195 bears the N6-(pyridoxal phosphate)lysine mark. 236–237 is a binding site for pyridoxal 5'-phosphate; that stretch reads NT.

Belongs to the class-V pyridoxal-phosphate-dependent aminotransferase family. SerC subfamily. As to quaternary structure, homodimer. It depends on pyridoxal 5'-phosphate as a cofactor.

The protein resides in the cytoplasm. It catalyses the reaction O-phospho-L-serine + 2-oxoglutarate = 3-phosphooxypyruvate + L-glutamate. The catalysed reaction is 4-(phosphooxy)-L-threonine + 2-oxoglutarate = (R)-3-hydroxy-2-oxo-4-phosphooxybutanoate + L-glutamate. It participates in amino-acid biosynthesis; L-serine biosynthesis; L-serine from 3-phospho-D-glycerate: step 2/3. Its pathway is cofactor biosynthesis; pyridoxine 5'-phosphate biosynthesis; pyridoxine 5'-phosphate from D-erythrose 4-phosphate: step 3/5. In terms of biological role, catalyzes the reversible conversion of 3-phosphohydroxypyruvate to phosphoserine and of 3-hydroxy-2-oxo-4-phosphonooxybutanoate to phosphohydroxythreonine. This is Phosphoserine aminotransferase from Herpetosiphon aurantiacus (strain ATCC 23779 / DSM 785 / 114-95).